A 471-amino-acid chain; its full sequence is tRNA-2-methylthio-N(6)-dimethylallyladenosine synthase (471 aa).

An MTTase N-terminal domain is found at 33–151; sequence KKYMITTYGC…FPELLSRSME (119 aa). Positions 42, 78, 112, 188, 192, and 195 each coordinate [4Fe-4S] cluster. The 231-residue stretch at 174–404 folds into the Radical SAM core domain; the sequence is RKYDLKGFIN…LDKVNEISAE (231 aa). The TRAM domain maps to 407-470; sequence QSYLNKVVEV…TFSLNGEVIQ (64 aa).

It belongs to the methylthiotransferase family. MiaB subfamily. As to quaternary structure, monomer. It depends on [4Fe-4S] cluster as a cofactor.

It is found in the cytoplasm. The enzyme catalyses N(6)-dimethylallyladenosine(37) in tRNA + (sulfur carrier)-SH + AH2 + 2 S-adenosyl-L-methionine = 2-methylsulfanyl-N(6)-dimethylallyladenosine(37) in tRNA + (sulfur carrier)-H + 5'-deoxyadenosine + L-methionine + A + S-adenosyl-L-homocysteine + 2 H(+). Functionally, catalyzes the methylthiolation of N6-(dimethylallyl)adenosine (i(6)A), leading to the formation of 2-methylthio-N6-(dimethylallyl)adenosine (ms(2)i(6)A) at position 37 in tRNAs that read codons beginning with uridine. This is tRNA-2-methylthio-N(6)-dimethylallyladenosine synthase from Alkaliphilus oremlandii (strain OhILAs) (Clostridium oremlandii (strain OhILAs)).